The following is a 20-amino-acid chain: Putative 18 kDa spermidine-binding protein (20 aa).

Dimer of 18 kDa and 60 kDa subunit.

It localises to the microsome membrane. The protein resides in the endoplasmic reticulum membrane. May have spermidine-binding activity. This Zea mays (Maize) protein is Putative 18 kDa spermidine-binding protein.